A 361-amino-acid polypeptide reads, in one-letter code: Mannose-1-phosphate guanyltransferase (361 aa).

The protein belongs to the transferase hexapeptide repeat family.

The protein localises to the cytoplasm. It catalyses the reaction alpha-D-mannose 1-phosphate + GTP + H(+) = GDP-alpha-D-mannose + diphosphate. The protein operates within nucleotide-sugar biosynthesis; GDP-alpha-D-mannose biosynthesis; GDP-alpha-D-mannose from alpha-D-mannose 1-phosphate (GTP route): step 1/1. Its function is as follows. Involved in cell wall synthesis where it is required for glycosylation. Involved in cell cycle progression through cell-size checkpoint. The polypeptide is Mannose-1-phosphate guanyltransferase (MPG1) (Kluyveromyces lactis (strain ATCC 8585 / CBS 2359 / DSM 70799 / NBRC 1267 / NRRL Y-1140 / WM37) (Yeast)).